Consider the following 156-residue polypeptide: Small ribosomal subunit protein uS7 (156 aa).

It belongs to the universal ribosomal protein uS7 family. As to quaternary structure, part of the 30S ribosomal subunit. Contacts proteins S9 and S11.

In terms of biological role, one of the primary rRNA binding proteins, it binds directly to 16S rRNA where it nucleates assembly of the head domain of the 30S subunit. Is located at the subunit interface close to the decoding center, probably blocks exit of the E-site tRNA. The protein is Small ribosomal subunit protein uS7 of Buchnera aphidicola subsp. Acyrthosiphon pisum (strain Tuc7).